The sequence spans 516 residues: DNA topoisomerase large subunit (516 aa).

128 to 136 serves as a coordination point for ATP; the sequence is VTGGMNGVG. A DNA-binding region spans residues 369–400; it reads AALARKLAAEKAAETKAAKKASKAKVHKHIKA.

Belongs to the type II topoisomerase family. In terms of assembly, part of the DNA topoisomerase complex made of gp39, gp52 and gp60. It depends on Mg(2+) as a cofactor.

The enzyme catalyses ATP-dependent breakage, passage and rejoining of double-stranded DNA.. Large subunit of the DNA topoisomerase that untwists superhelical DNA. Controls of topological states of double-stranded DNA by transient breakage and subsequent rejoining of DNA strands. The protein is DNA topoisomerase large subunit (39) of Escherichia coli (Bacteriophage T4).